We begin with the raw amino-acid sequence, 218 residues long: MRLKNKPWANELVEEHPESALDRPDPAEKIDWEARFGNDKPIEIEVGSGKGQFITTLAKQHPDRNFVAMEIQKTAAGIILKKKLDEGLDNLQILCADAANLVAYFGENSTSKIYLNFSDPWPKSRHEKRRLTYKDFLAKYQAVLTGDGLIEFKTDNSGLFAYSVKSMNNYGMHFDFMSVDLHHESEEIVEKNVETEYEHKFASKGQPIYCLHAGFLAK.

The disordered stretch occupies residues 1–26 (MRLKNKPWANELVEEHPESALDRPDP). Residues 13–26 (VEEHPESALDRPDP) show a composition bias toward basic and acidic residues. The S-adenosyl-L-methionine site is built by glutamate 45, glutamate 70, aspartate 97, and aspartate 119. Aspartate 119 is an active-site residue. Lysine 123 provides a ligand contact to substrate. The interaction with RNA stretch occupies residues 125 to 130 (RHEKRR). Residues aspartate 155 and 195 to 198 (TEYE) each bind substrate.

It belongs to the class I-like SAM-binding methyltransferase superfamily. TrmB family.

The enzyme catalyses guanosine(46) in tRNA + S-adenosyl-L-methionine = N(7)-methylguanosine(46) in tRNA + S-adenosyl-L-homocysteine. Its pathway is tRNA modification; N(7)-methylguanine-tRNA biosynthesis. Its function is as follows. Catalyzes the formation of N(7)-methylguanine at position 46 (m7G46) in tRNA. The sequence is that of tRNA (guanine-N(7)-)-methyltransferase from Lactobacillus delbrueckii subsp. bulgaricus (strain ATCC 11842 / DSM 20081 / BCRC 10696 / JCM 1002 / NBRC 13953 / NCIMB 11778 / NCTC 12712 / WDCM 00102 / Lb 14).